We begin with the raw amino-acid sequence, 556 residues long: Formate--tetrahydrofolate ligase (556 aa).

65 to 72 (TPAGEGKS) is a binding site for ATP.

The protein belongs to the formate--tetrahydrofolate ligase family.

It carries out the reaction (6S)-5,6,7,8-tetrahydrofolate + formate + ATP = (6R)-10-formyltetrahydrofolate + ADP + phosphate. It functions in the pathway one-carbon metabolism; tetrahydrofolate interconversion. This chain is Formate--tetrahydrofolate ligase, found in Streptococcus equi subsp. equi (strain 4047).